A 271-amino-acid polypeptide reads, in one-letter code: Solute carrier family 66 member 2 (271 aa).

Transmembrane regions (helical) follow at residues 8-28, 49-69, and 76-96; these read WLLV…MVFG, FSTY…LFWF, and PLLW…KLCT. The PQ-loop 1 domain occupies 14-80; sequence HQLVSWGAAA…RRFESPLLWQ (67 aa). Position 110 is a phosphoserine (Ser110). The next 3 helical transmembrane spans lie at 145–165, 168–188, and 232–252; these read DYVQ…YLSI, ALFV…LGVP, and VCGL…YAFA. The PQ-loop 2 domain maps to 178 to 233; that stretch reads AVLTEAMLGVPQLYRNHRHQSTEGMSIKMVLMWTSGDAFKTAYFLLKGAPLQFSVC.

The protein localises to the membrane. The protein is Solute carrier family 66 member 2 of Homo sapiens (Human).